A 431-amino-acid chain; its full sequence is Glucose-1-phosphate adenylyltransferase (431 aa).

Lys-39 contributes to the beta-D-fructose 1,6-bisphosphate binding site. Residues Arg-40, His-46, and Arg-52 each coordinate AMP. Residue Tyr-114 participates in alpha-D-glucose 1-phosphate binding. Residue Arg-130 participates in AMP binding. Alpha-D-glucose 1-phosphate-binding positions include Gly-179, 194 to 195 (EK), and Ser-212. Residue Arg-386 participates in AMP binding. Residues 419–423 (REMLR) and 429–431 (QER) each bind beta-D-fructose 1,6-bisphosphate.

This sequence belongs to the bacterial/plant glucose-1-phosphate adenylyltransferase family. In terms of assembly, homotetramer.

It catalyses the reaction alpha-D-glucose 1-phosphate + ATP + H(+) = ADP-alpha-D-glucose + diphosphate. It functions in the pathway glycan biosynthesis; glycogen biosynthesis. Allosterically activated by fructose-1,6-bisphosphate (F16BP) and inhibited by AMP. Functionally, involved in the biosynthesis of ADP-glucose, a building block required for the elongation reactions to produce glycogen. Catalyzes the reaction between ATP and alpha-D-glucose 1-phosphate (G1P) to produce pyrophosphate and ADP-Glc. The sequence is that of Glucose-1-phosphate adenylyltransferase from Enterobacter sp. (strain 638).